The chain runs to 426 residues: MRILIEDVNILIDDKIVENKNILIENDIIKQISDSKSFERIDYIIDGKNKIALPGLVNTHTHLAMTLFRGFADDLPLEEWLEEKIWPQEAKLTADDVYWGSLLGICEMIRGGTIAFSDMYFFMDEMAKAVAESGIKASLSVGMIGIAGDENETLNRGVSFAKNWHNAEDGRIRVMLGPHAPYTCPPSFLEKVIDKAIEMSLGIHTHLSETYLEVENIKNMYGLTPIRLMDRVGLFNVPVLAAHCVFVDDEEIEILSEKGVGVAHNPQSNLKLASGVAPVKKMLEKGVKVGLGTDGPASNNNLDMWEEIRLVATLHKGVERDPICVPARDALIMATKNGMEILGFENSGIIKEGYKADLILVDVNKPHFYPRHNLVSHLVYSASSSDVDTVIVDGRILMEKRELKTLDEEKIMYEAEKRAFELIKKS.

2 residues coordinate Zn(2+): His60 and His62. Residues Glu89 and His179 each contribute to the substrate site. A Zn(2+)-binding site is contributed by His206. Substrate contacts are provided by Glu209 and Asp294. Asp294 contacts Zn(2+).

It belongs to the metallo-dependent hydrolases superfamily. MTA/SAH deaminase family. Zn(2+) is required as a cofactor.

The catalysed reaction is S-adenosyl-L-homocysteine + H2O + H(+) = S-inosyl-L-homocysteine + NH4(+). It carries out the reaction S-methyl-5'-thioadenosine + H2O + H(+) = S-methyl-5'-thioinosine + NH4(+). In terms of biological role, catalyzes the deamination of 5-methylthioadenosine and S-adenosyl-L-homocysteine into 5-methylthioinosine and S-inosyl-L-homocysteine, respectively. Is also able to deaminate adenosine. In Dictyoglomus thermophilum (strain ATCC 35947 / DSM 3960 / H-6-12), this protein is 5-methylthioadenosine/S-adenosylhomocysteine deaminase.